The primary structure comprises 546 residues: CTP synthase (546 aa).

An amidoligase domain region spans residues 1 to 266 (MTTRYIFVTG…DQLVTKRFGI (266 aa)). S14 is a CTP binding site. Residue S14 participates in UTP binding. ATP is bound by residues 15 to 20 (SLGKGI) and D72. D72 and E140 together coordinate Mg(2+). CTP contacts are provided by residues 147 to 149 (DIE), 187 to 192 (KTKPTQ), and K223. Residues 187–192 (KTKPTQ) and K223 contribute to the UTP site. ATP is bound at residue 239-241 (KDV). One can recognise a Glutamine amidotransferase type-1 domain in the interval 291-542 (TIGMVGKYIE…VAAAAAYQKR (252 aa)). G352 lines the L-glutamine pocket. The Nucleophile; for glutamine hydrolysis role is filled by C379. L-glutamine is bound by residues 380-383 (LGMQ), E403, and R470. Active-site residues include H515 and E517.

It belongs to the CTP synthase family. Homotetramer.

It catalyses the reaction UTP + L-glutamine + ATP + H2O = CTP + L-glutamate + ADP + phosphate + 2 H(+). The catalysed reaction is L-glutamine + H2O = L-glutamate + NH4(+). The enzyme catalyses UTP + NH4(+) + ATP = CTP + ADP + phosphate + 2 H(+). The protein operates within pyrimidine metabolism; CTP biosynthesis via de novo pathway; CTP from UDP: step 2/2. Allosterically activated by GTP, when glutamine is the substrate; GTP has no effect on the reaction when ammonia is the substrate. The allosteric effector GTP functions by stabilizing the protein conformation that binds the tetrahedral intermediate(s) formed during glutamine hydrolysis. Inhibited by the product CTP, via allosteric rather than competitive inhibition. Functionally, catalyzes the ATP-dependent amination of UTP to CTP with either L-glutamine or ammonia as the source of nitrogen. Regulates intracellular CTP levels through interactions with the four ribonucleotide triphosphates. In Shewanella pealeana (strain ATCC 700345 / ANG-SQ1), this protein is CTP synthase.